Reading from the N-terminus, the 307-residue chain is Acyl transferase (307 aa).

Active-site charge relay system residues include Ser116, Asp213, and His243.

It belongs to the LuxD family.

It participates in lipid metabolism; fatty acid reduction for biolumincescence. In terms of biological role, acyl transferase is part of the fatty acid reductase system required for aldehyde biosynthesis; it produces fatty acids for the luminescent reaction. The protein is Acyl transferase of Aliivibrio fischeri (Vibrio fischeri).